Reading from the N-terminus, the 449-residue chain is Chromosomal replication initiator protein DnaA (449 aa).

The tract at residues 1-72 is domain I, interacts with DnaA modulators; that stretch reads MENIHDLWER…SETIDDLTGV (72 aa). Positions 72 to 111 are domain II; the sequence is VRLYPKFVIPTSQLDEPFVEQELKKPMKQPPAQNGEMPNN. The tract at residues 112-328 is domain III, AAA+ region; the sequence is MLNDKYTFDT…GALIRVVAYS (217 aa). Residues Gly-156, Gly-158, Lys-159, and Thr-160 each contribute to the ATP site. Residues 329–449 form a domain IV, binds dsDNA region; that stretch reads SLINQDMNAD…IQDISDKLRS (121 aa).

It belongs to the DnaA family. As to quaternary structure, oligomerizes as a right-handed, spiral filament on DNA at oriC.

It is found in the cytoplasm. In terms of biological role, plays an essential role in the initiation and regulation of chromosomal replication. ATP-DnaA binds to the origin of replication (oriC) to initiate formation of the DNA replication initiation complex once per cell cycle. Binds the DnaA box (a 9 base pair repeat at the origin) and separates the double-stranded (ds)DNA. Forms a right-handed helical filament on oriC DNA; dsDNA binds to the exterior of the filament while single-stranded (ss)DNA is stabiized in the filament's interior. The ATP-DnaA-oriC complex binds and stabilizes one strand of the AT-rich DNA unwinding element (DUE), permitting loading of DNA polymerase. After initiation quickly degrades to an ADP-DnaA complex that is not apt for DNA replication. Binds acidic phospholipids. The polypeptide is Chromosomal replication initiator protein DnaA (Halalkalibacterium halodurans (strain ATCC BAA-125 / DSM 18197 / FERM 7344 / JCM 9153 / C-125) (Bacillus halodurans)).